The sequence spans 362 residues: Cobalt-precorrin-5B C(1)-methyltransferase (362 aa).

The protein belongs to the CbiD family.

It catalyses the reaction Co-precorrin-5B + S-adenosyl-L-methionine = Co-precorrin-6A + S-adenosyl-L-homocysteine. It functions in the pathway cofactor biosynthesis; adenosylcobalamin biosynthesis; cob(II)yrinate a,c-diamide from sirohydrochlorin (anaerobic route): step 6/10. Catalyzes the methylation of C-1 in cobalt-precorrin-5B to form cobalt-precorrin-6A. This is Cobalt-precorrin-5B C(1)-methyltransferase from Burkholderia orbicola (strain MC0-3).